The chain runs to 273 residues: Bifunctional protein FolD (273 aa).

Residues 149 to 151 (GLG) and V215 contribute to the NADP(+) site.

The protein belongs to the tetrahydrofolate dehydrogenase/cyclohydrolase family. Homodimer.

It carries out the reaction (6R)-5,10-methylene-5,6,7,8-tetrahydrofolate + NADP(+) = (6R)-5,10-methenyltetrahydrofolate + NADPH. The enzyme catalyses (6R)-5,10-methenyltetrahydrofolate + H2O = (6R)-10-formyltetrahydrofolate + H(+). The protein operates within one-carbon metabolism; tetrahydrofolate interconversion. Functionally, catalyzes the oxidation of 5,10-methylenetetrahydrofolate to 5,10-methenyltetrahydrofolate and then the hydrolysis of 5,10-methenyltetrahydrofolate to 10-formyltetrahydrofolate. This Mycoplasma genitalium (strain ATCC 33530 / DSM 19775 / NCTC 10195 / G37) (Mycoplasmoides genitalium) protein is Bifunctional protein FolD.